Consider the following 110-residue polypeptide: DNA-binding protein PAE3044 (110 aa).

This sequence belongs to the PDCD5 family.

The polypeptide is DNA-binding protein PAE3044 (Pyrobaculum aerophilum (strain ATCC 51768 / DSM 7523 / JCM 9630 / CIP 104966 / NBRC 100827 / IM2)).